A 162-amino-acid chain; its full sequence is MFLSEAGARPRAGEASASERRKWVKVFKACDEDNKGYLSREDFKVAIVMLFGYKPSKIEADAVMSSVNPNTSGVSLEGFLSAVKRKKEARLYRNEIRQIFTAFDVHYRGFLTLEDFKRAFSRVAPKLPARTVLEVFREADQDSDGHVSFRDFEYAMNHGQSK.

EF-hand domains are found at residues 18 to 53, 91 to 126, and 127 to 162; these read SERRKWVKVFKACDEDNKGYLSREDFKVAIVMLFGY, LYRNEIRQIFTAFDVHYRGFLTLEDFKRAFSRVAPK, and LPARTVLEVFREADQDSDGHVSFRDFEYAMNHGQSK. Ca(2+) is bound by residues aspartate 140, aspartate 142, aspartate 144, histidine 146, and aspartate 151.

The sequence is that of EF-hand calcium-binding domain-containing protein 11 (Efcab11) from Mus musculus (Mouse).